A 249-amino-acid polypeptide reads, in one-letter code: DNA repair protein RecO (249 aa).

This sequence belongs to the RecO family.

Its function is as follows. Involved in DNA repair and RecF pathway recombination. The protein is DNA repair protein RecO of Lactobacillus delbrueckii subsp. bulgaricus (strain ATCC 11842 / DSM 20081 / BCRC 10696 / JCM 1002 / NBRC 13953 / NCIMB 11778 / NCTC 12712 / WDCM 00102 / Lb 14).